A 169-amino-acid polypeptide reads, in one-letter code: MAGAELGAALEQRLGALAIHTEVVEHPEVFTVEEMMPHIQHLKGAHSKNLFLKDKKKKNYWLVTVLHDRQINLNELAKQLGVGSGNLRFADETAMLEKLKVGQGCATPLALFCDGGDVKFVLDSAFLEGGHEKVYFHPMTNAATMGLSPEDFLTFVKMTGHDPIILNFD.

This sequence belongs to the PRORSD1 family.

The chain is Putative prolyl-tRNA synthetase associated domain-containing protein 1 (PRORSD1P) from Homo sapiens (Human).